The primary structure comprises 700 residues: Suprabasin (700 aa).

An N-terminal signal peptide occupies residues 1 to 23; sequence MYLVSLLSSCCLLVLLGTLPARA. Disordered regions lie at residues 133-158, 183-258, and 283-391; these read QGGS…VANK, HAFG…VADK, and HAFG…GAHH. Residues 488–546 are a coiled coil; it reads KEAEKVAHGVQNGVNQAQKEAEKVAHGVQNGVNQAQKEAEKVAHGVQNGVNQAQKEAEK. Residues 641 to 654 show a composition bias toward polar residues; sequence GVNQPSKEANQLLN. The segment at 641-669 is disordered; it reads GVNQPSKEANQLLNGSHQGQGGYGGQHGG. A compositionally biased stretch (gly residues) spans 658–668; sequence QGQGGYGGQHG.

Detected in epidermis, in suprabasal keratinocytes. Detected in suprabasal layers of embryonic epidermis and in stratified layers of embryonic tongue and palate. Detected in adult stomach.

It is found in the secreted. The chain is Suprabasin (Sbsn) from Mus musculus (Mouse).